The following is a 436-amino-acid chain: MFDSTLNPLWQRYILAVQEEVKPALGCTEPISLALAAAVAAAELEGPVERVEAWVSPNLMKNGLGVTVPGTGMVGLPIAAALGALGGNANAGLEVLKDATAQAIADAKALLAAGKVSVKIQEPCDEILFSRAKVWNGEKWACVTIVGGHTNIVHIETHNGVVFTQQACVTEGEQESPLTVLSRTTLAEILKFVNEVPFAAIRFILDSAKLNCALSQEGLSGNWGLHIGATLEKQCERGLLAKDLSSSIVIRTSAASDARMGGATLPAMSNSGSGNQGITATMPVVVVAEHFGADDERLARALMLSHLSAIYIHNQLPRLSALCAATTAAMGAAAGMAWLVDGRYETISMAISSMIGDVSGMICDGASNSCAMKVSTSASAAWKAVLMALDDTAVTGNEGIVAHDVEQSIANLCALASHSMQQTDRQIIEIMASKAR.

The protein belongs to the UPF0597 family.

In Escherichia coli O127:H6 (strain E2348/69 / EPEC), this protein is UPF0597 protein YhaM.